We begin with the raw amino-acid sequence, 755 residues long: Xaa-Pro dipeptidyl-peptidase (755 aa).

Residues Ser348, Asp468, and His498 each act as charge relay system in the active site.

The protein belongs to the peptidase S15 family. In terms of assembly, homodimer.

The protein localises to the cytoplasm. The enzyme catalyses Hydrolyzes Xaa-Pro-|- bonds to release unblocked, N-terminal dipeptides from substrates including Ala-Pro-|-p-nitroanilide and (sequentially) Tyr-Pro-|-Phe-Pro-|-Gly-Pro-|-Ile.. In terms of biological role, removes N-terminal dipeptides sequentially from polypeptides having unsubstituted N-termini provided that the penultimate residue is proline. The chain is Xaa-Pro dipeptidyl-peptidase from Streptococcus thermophilus (strain ATCC BAA-250 / LMG 18311).